The chain runs to 369 residues: UDP-N-acetylglucosamine--N-acetylmuramyl-(pentapeptide) pyrophosphoryl-undecaprenol N-acetylglucosamine transferase (369 aa).

UDP-N-acetyl-alpha-D-glucosamine-binding positions include Thr10–Gly12, Asn124, Arg166, Ser196, Ile251, and Gln296.

The protein belongs to the glycosyltransferase 28 family. MurG subfamily.

The protein resides in the cell membrane. It carries out the reaction di-trans,octa-cis-undecaprenyl diphospho-N-acetyl-alpha-D-muramoyl-L-alanyl-D-glutamyl-meso-2,6-diaminopimeloyl-D-alanyl-D-alanine + UDP-N-acetyl-alpha-D-glucosamine = di-trans,octa-cis-undecaprenyl diphospho-[N-acetyl-alpha-D-glucosaminyl-(1-&gt;4)]-N-acetyl-alpha-D-muramoyl-L-alanyl-D-glutamyl-meso-2,6-diaminopimeloyl-D-alanyl-D-alanine + UDP + H(+). It participates in cell wall biogenesis; peptidoglycan biosynthesis. Its function is as follows. Cell wall formation. Catalyzes the transfer of a GlcNAc subunit on undecaprenyl-pyrophosphoryl-MurNAc-pentapeptide (lipid intermediate I) to form undecaprenyl-pyrophosphoryl-MurNAc-(pentapeptide)GlcNAc (lipid intermediate II). This is UDP-N-acetylglucosamine--N-acetylmuramyl-(pentapeptide) pyrophosphoryl-undecaprenol N-acetylglucosamine transferase from Acetivibrio thermocellus (strain ATCC 27405 / DSM 1237 / JCM 9322 / NBRC 103400 / NCIMB 10682 / NRRL B-4536 / VPI 7372) (Clostridium thermocellum).